Reading from the N-terminus, the 471-residue chain is Secretogranin-3 (471 aa).

The signal sequence occupies residues 1–22; sequence MGFLWTGTWIVVLMLHSSPIQA. 2 disordered regions span residues 23-72 and 86-105; these read FPKP…ESNY and EKEKNEKERQSVKISPNDNK. The segment covering 32 to 45 has biased composition (basic and acidic residues); it reads KPLHNRELSAERPL. Ser40 carries the post-translational modification Phosphoserine. Ser40 carries O-linked (Xyl...) (chondroitin sulfate) serine glycosylation. Residue Asn71 is glycosylated (N-linked (GlcNAc...) asparagine). A compositionally biased stretch (basic and acidic residues) spans 86 to 96; it reads EKEKNEKERQS. Asn353 carries an N-linked (GlcNAc...) asparagine glycan. Residues 357 to 409 form a disordered region; it reads LFAVPSEKSHEETDSTKEEAAKMEKEYGTLKDSTKDDDSNPRGKTDEHKGKTE. Positions 363-409 are enriched in basic and acidic residues; sequence EKSHEETDSTKEEAAKMEKEYGTLKDSTKDDDSNPRGKTDEHKGKTE. Phosphoserine is present on Ser365.

In terms of assembly, interacts with CHGA. Interacts with secretogranin II/SCG2. Interacts (via C-terminus) with CPE.

It is found in the cytoplasmic vesicle. Its subcellular location is the secretory vesicle. It localises to the secretory vesicle membrane. The protein resides in the secreted. Member of the granin protein family that regulates the biogenesis of secretory granules. Acts as a sorting receptor for intragranular proteins including chromogranin A/CHGA. May also play a role in angiogenesis. Promotes endothelial proliferation, migration and tube formation through MEK/ERK signaling pathway. The chain is Secretogranin-3 (SCG3) from Bos taurus (Bovine).